A 514-amino-acid chain; its full sequence is Lysine--tRNA ligase (514 aa).

Mg(2+)-binding residues include glutamate 424 and glutamate 431.

It belongs to the class-II aminoacyl-tRNA synthetase family. Homodimer. Mg(2+) is required as a cofactor.

The protein resides in the cytoplasm. The enzyme catalyses tRNA(Lys) + L-lysine + ATP = L-lysyl-tRNA(Lys) + AMP + diphosphate. This is Lysine--tRNA ligase from Cupriavidus necator (strain ATCC 17699 / DSM 428 / KCTC 22496 / NCIMB 10442 / H16 / Stanier 337) (Ralstonia eutropha).